The sequence spans 500 residues: Maturase K (500 aa).

It belongs to the intron maturase 2 family. MatK subfamily.

It localises to the plastid. The protein localises to the chloroplast. Its function is as follows. Usually encoded in the trnK tRNA gene intron. Probably assists in splicing its own and other chloroplast group II introns. This chain is Maturase K, found in Proboscidea louisianica (Louisiana Devil's-claw).